Consider the following 119-residue polypeptide: Ribonuclease P protein component (119 aa).

This sequence belongs to the RnpA family. In terms of assembly, consists of a catalytic RNA component (M1 or rnpB) and a protein subunit.

It catalyses the reaction Endonucleolytic cleavage of RNA, removing 5'-extranucleotides from tRNA precursor.. RNaseP catalyzes the removal of the 5'-leader sequence from pre-tRNA to produce the mature 5'-terminus. It can also cleave other RNA substrates such as 4.5S RNA. The protein component plays an auxiliary but essential role in vivo by binding to the 5'-leader sequence and broadening the substrate specificity of the ribozyme. The chain is Ribonuclease P protein component from Aromatoleum aromaticum (strain DSM 19018 / LMG 30748 / EbN1) (Azoarcus sp. (strain EbN1)).